Consider the following 270-residue polypeptide: MWQGNLELIYKQKNLATEINHVYATAPLKVQRPFYPEGKNLCHTVILHTAGGIVGGDVLQQKIHLQAATNALITTASAGKVYQSNGQMAQQLIEIKIDDNASLEWLPQETIIFNGAAFRQHLRVDLGENSSWLGWEITRFGRSARGEKFLAGEWHSNWEIWRSGQPLWLDRSCLLGGKMIEGFSGLNDSALIGTLVYIGQPVGRNLIEKVRDFSLEGERGVTNTLGDGLLCRYRGNSSGEVRQWFQQVWQILRREMSDQEAIIPRVWLSW.

This sequence belongs to the UreD family. UreD, UreF and UreG form a complex that acts as a GTP-hydrolysis-dependent molecular chaperone, activating the urease apoprotein by helping to assemble the nickel containing metallocenter of UreC. The UreE protein probably delivers the nickel.

Its subcellular location is the cytoplasm. Required for maturation of urease via the functional incorporation of the urease nickel metallocenter. The protein is Urease accessory protein UreD of Microcystis aeruginosa (strain NIES-843 / IAM M-2473).